Consider the following 382-residue polypeptide: Anhydro-N-acetylmuramic acid kinase (382 aa).

18–25 provides a ligand contact to ATP; that stretch reads GTSLDGVD.

This sequence belongs to the anhydro-N-acetylmuramic acid kinase family.

It carries out the reaction 1,6-anhydro-N-acetyl-beta-muramate + ATP + H2O = N-acetyl-D-muramate 6-phosphate + ADP + H(+). Its pathway is amino-sugar metabolism; 1,6-anhydro-N-acetylmuramate degradation. It functions in the pathway cell wall biogenesis; peptidoglycan recycling. In terms of biological role, catalyzes the specific phosphorylation of 1,6-anhydro-N-acetylmuramic acid (anhMurNAc) with the simultaneous cleavage of the 1,6-anhydro ring, generating MurNAc-6-P. Is required for the utilization of anhMurNAc either imported from the medium or derived from its own cell wall murein, and thus plays a role in cell wall recycling. The chain is Anhydro-N-acetylmuramic acid kinase from Ralstonia nicotianae (strain ATCC BAA-1114 / GMI1000) (Ralstonia solanacearum).